The primary structure comprises 333 residues: Methionyl-tRNA formyltransferase (333 aa).

106 to 109 provides a ligand contact to (6S)-5,6,7,8-tetrahydrofolate; the sequence is SLLP.

The protein belongs to the Fmt family.

It catalyses the reaction L-methionyl-tRNA(fMet) + (6R)-10-formyltetrahydrofolate = N-formyl-L-methionyl-tRNA(fMet) + (6S)-5,6,7,8-tetrahydrofolate + H(+). Its function is as follows. Attaches a formyl group to the free amino group of methionyl-tRNA(fMet). The formyl group appears to play a dual role in the initiator identity of N-formylmethionyl-tRNA by promoting its recognition by IF2 and preventing the misappropriation of this tRNA by the elongation apparatus. This is Methionyl-tRNA formyltransferase from Elusimicrobium minutum (strain Pei191).